The sequence spans 509 residues: ATP synthase subunit alpha (509 aa).

Residue 169–176 (GDRQTGKT) coordinates ATP.

The protein belongs to the ATPase alpha/beta chains family. In terms of assembly, F-type ATPases have 2 components, CF(1) - the catalytic core - and CF(0) - the membrane proton channel. CF(1) has five subunits: alpha(3), beta(3), gamma(1), delta(1), epsilon(1). CF(0) has four main subunits: a(1), b(1), b'(1) and c(9-12).

The protein localises to the cell inner membrane. The enzyme catalyses ATP + H2O + 4 H(+)(in) = ADP + phosphate + 5 H(+)(out). In terms of biological role, produces ATP from ADP in the presence of a proton gradient across the membrane. The alpha chain is a regulatory subunit. This chain is ATP synthase subunit alpha, found in Erythrobacter litoralis (strain HTCC2594).